The following is a 430-amino-acid chain: Probable proton-coupled zinc antiporter SLC30A4 (430 aa).

Residues Met-1–Arg-113 lie on the Cytoplasmic side of the membrane. Position 36 is a phosphoserine (Ser-36). The chain crosses the membrane as a helical span at residues Leu-114–Met-134. Residues Ala-135–Asp-143 are Lumenal-facing. Residues Ala-144 to Ser-164 form a helical membrane-spanning segment. The Zn(2+) site is built by His-146 and Asp-150. Topologically, residues Ser-165–Arg-178 are cytoplasmic. Residues Leu-179–Leu-199 traverse the membrane as a helical segment. At Tyr-200 to Asp-216 the chain is on the lumenal side. A helical membrane pass occupies residues Val-217–Asn-237. Topologically, residues Gln-238–Ala-275 are cytoplasmic. The tract at residues Gly-240 to His-265 is zinc binding. Residues His-245–Asn-264 are disordered. The span at His-249 to His-263 shows a compositional bias: low complexity. The helical transmembrane segment at Phe-276–Ile-296 threads the bilayer. Zn(2+) is bound by residues His-278 and Asp-282. Residues Arg-297–Tyr-311 lie on the Lumenal side of the membrane. Residues Ile-312–Ile-332 form a helical membrane-spanning segment. Residues Leu-333–Thr-430 lie on the Cytoplasmic side of the membrane.

It belongs to the cation diffusion facilitator (CDF) transporter (TC 2.A.4) family. SLC30A subfamily. In terms of assembly, homodimerization could regulate efficiency for zinc transport. Interacts with TMEM163. As to expression, widely expressed. Highly expressed in the brain and in mammary epithelial cell lines.

The protein localises to the endosome membrane. The protein resides in the late endosome membrane. It localises to the lysosome membrane. The enzyme catalyses Zn(2+)(in) + 2 H(+)(out) = Zn(2+)(out) + 2 H(+)(in). Its function is as follows. Probable proton-coupled zinc ion antiporter mediating zinc import from cytoplasm potentially into the endocytic compartment. Controls zinc deposition in milk. This chain is Probable proton-coupled zinc antiporter SLC30A4, found in Mus musculus (Mouse).